Reading from the N-terminus, the 527-residue chain is Glucose-6-phosphate isomerase (527 aa).

Glu323 serves as the catalytic Proton donor. Active-site residues include His352 and Lys454.

The protein belongs to the GPI family.

Its subcellular location is the cytoplasm. It carries out the reaction alpha-D-glucose 6-phosphate = beta-D-fructose 6-phosphate. Its pathway is carbohydrate biosynthesis; gluconeogenesis. The protein operates within carbohydrate degradation; glycolysis; D-glyceraldehyde 3-phosphate and glycerone phosphate from D-glucose: step 2/4. Functionally, catalyzes the reversible isomerization of glucose-6-phosphate to fructose-6-phosphate. The polypeptide is Glucose-6-phosphate isomerase (Prochlorococcus marinus (strain MIT 9515)).